Reading from the N-terminus, the 542-residue chain is Propane 2-monooxygenase, hydroxylase component large subunit (542 aa).

Fe cation contacts are provided by Glu-97, Glu-127, His-130, Glu-192, Glu-226, and His-229.

Belongs to the TmoA/XamoA family. As to quaternary structure, the propane 2-monooxygenase multicomponent enzyme system is composed of an electron transfer component and a monooxygenase component interacting with the effector protein MimD. The electron transfer component is composed of a reductase (MimB), and the monooxygenase component is formed by a large subunit (MimA) and a small subunit (MimC). Requires the presence of the chaperonin-like protein MimG to ensure a productive folding, resulting of a soluble MimA, which leads to the active form of MimABCD. The cofactor is Fe(2+).

It carries out the reaction propane + NADH + O2 + H(+) = propan-2-ol + NAD(+) + H2O. The enzyme catalyses acetone + NADH + O2 + H(+) = hydroxyacetone + NAD(+) + H2O. It catalyses the reaction butan-2-one + NADH + O2 + H(+) = 1-hydroxy-2-butanone + NAD(+) + H2O. The catalysed reaction is phenol + NADH + O2 + H(+) = hydroquinone + NAD(+) + H2O. In terms of biological role, component of the propane 2-monooxygenase multicomponent enzyme system which is involved in the degradation of propane via the O2-dependent hydroxylation of propane. Also involved in the degradation of acetone via the O2-dependent hydroxylation of acetone. Also able to catalyze the oxidation of phenol, methylethylketone (2-butanone), 1-propanol and 2-propanol. In Mycolicibacterium goodii (Mycobacterium goodii), this protein is Propane 2-monooxygenase, hydroxylase component large subunit.